Reading from the N-terminus, the 319-residue chain is Lambda-crystallin homolog (319 aa).

Ala2 bears the N-acetylalanine mark. Phosphoserine is present on Ser3. NAD(+)-binding positions include 16-17 (LI), Asp36, Glu97, and Lys102.

The protein belongs to the 3-hydroxyacyl-CoA dehydrogenase family. Homodimer. In terms of tissue distribution, widely expressed, with highest levels in liver. Undetectable in skeletal muscle.

The protein resides in the cytoplasm. It catalyses the reaction L-gulonate + NAD(+) = 3-dehydro-L-gulonate + NADH + H(+). With respect to regulation, inhibited by malonate. Its function is as follows. Has high L-gulonate 3-dehydrogenase activity. It also exhibits low dehydrogenase activity toward L-3-hydroxybutyrate (HBA) and L-threonate. This is Lambda-crystallin homolog (Cryl1) from Mus musculus (Mouse).